A 356-amino-acid polypeptide reads, in one-letter code: Histidinol-phosphate aminotransferase 1 (356 aa).

Lys210 is subject to N6-(pyridoxal phosphate)lysine.

Belongs to the class-II pyridoxal-phosphate-dependent aminotransferase family. Histidinol-phosphate aminotransferase subfamily. As to quaternary structure, homodimer. Pyridoxal 5'-phosphate serves as cofactor.

The catalysed reaction is L-histidinol phosphate + 2-oxoglutarate = 3-(imidazol-4-yl)-2-oxopropyl phosphate + L-glutamate. Its pathway is amino-acid biosynthesis; L-histidine biosynthesis; L-histidine from 5-phospho-alpha-D-ribose 1-diphosphate: step 7/9. In Hydrogenovibrio crunogenus (strain DSM 25203 / XCL-2) (Thiomicrospira crunogena), this protein is Histidinol-phosphate aminotransferase 1.